Here is a 166-residue protein sequence, read N- to C-terminus: Transcriptional repressor NrdR (166 aa).

The segment at 3–34 is a zinc-finger region; the sequence is CPFCGFSDSRVLDSRPTVEGNSIRRRRECCGC. The ATP-cone domain maps to 49–139; the sequence is LIVVKKDGRR…VYREFRDAES (91 aa).

The protein belongs to the NrdR family. Requires Zn(2+) as cofactor.

Negatively regulates transcription of bacterial ribonucleotide reductase nrd genes and operons by binding to NrdR-boxes. In Pelotomaculum thermopropionicum (strain DSM 13744 / JCM 10971 / SI), this protein is Transcriptional repressor NrdR.